The following is a 406-amino-acid chain: Serine/threonine transporter SstT (406 aa).

The next 9 helical transmembrane spans lie at 11 to 31 (IGLV…GWLM), 45 to 65 (FVGA…MAAI), 79 to 99 (VLIM…VASF), 141 to 161 (AIAN…GLAL), 185 to 205 (FVIA…IAET), 216 to 236 (LLTI…PIIV), 298 to 318 (MAGA…TLGV), 330 to 350 (VVAT…LLLI), and 357 to 377 (FNIP…IGVV).

It belongs to the dicarboxylate/amino acid:cation symporter (DAACS) (TC 2.A.23) family.

It is found in the cell inner membrane. It carries out the reaction L-serine(in) + Na(+)(in) = L-serine(out) + Na(+)(out). It catalyses the reaction L-threonine(in) + Na(+)(in) = L-threonine(out) + Na(+)(out). In terms of biological role, involved in the import of serine and threonine into the cell, with the concomitant import of sodium (symport system). This chain is Serine/threonine transporter SstT, found in Psychrobacter sp. (strain PRwf-1).